A 504-amino-acid chain; its full sequence is Sucrose phosphorylase (504 aa).

Aspartate 50 contributes to the substrate binding site. Sucrose is bound by residues histidine 88, 190–192 (RLD), glutamate 232, 289–290 (HD), 342–345 (DLYQ), and arginine 399. The Nucleophile role is filled by aspartate 192. Residue glutamate 232 is the Proton donor of the active site.

Belongs to the glycosyl hydrolase 13 family. Sucrose phosphorylase subfamily. As to quaternary structure, homodimer.

The enzyme catalyses sucrose + phosphate = D-fructose + alpha-D-glucose 1-phosphate. Functionally, catalyzes the reversible phosphorolysis of sucrose into alpha-D-glucose 1-phosphate (Glc1P) and D-fructose. Is involved in sucrose degradation. Also displays transglucosylation activity in vitro, by transferring the glucosyl moiety of Glc1P to a broad range of monomeric sugars, such as D- and L-arabinose, D- and L-arabitol, and xylitol. The chain is Sucrose phosphorylase from Bifidobacterium adolescentis (strain ATCC 15703 / DSM 20083 / NCTC 11814 / E194a).